The chain runs to 641 residues: Epithelial sodium channel subunit beta (641 aa).

Over Met-1 to Ala-50 the chain is Cytoplasmic. A helical transmembrane segment spans residues Met-51–Ile-71. Residues Lys-72–Gly-533 lie on the Extracellular side of the membrane. Disulfide bonds link Cys-98/Cys-273, Cys-185/Cys-190, Cys-197/Cys-204, Cys-250/Cys-257, Cys-362/Cys-449, Cys-387/Cys-445, Cys-391/Cys-441, Cys-400/Cys-427, and Cys-402/Cys-416. Asn-141 carries an N-linked (GlcNAc...) asparagine glycan. N-linked (GlcNAc...) asparagine glycosylation is found at Asn-261 and Asn-379. The chain crosses the membrane as a helical span at residues Ser-534–Ile-554. Topologically, residues Lys-555–Val-641 are cytoplasmic. The interval Gly-596–Val-641 is disordered. A PY motif; recruits WW domain-containing proteins and is thereby required for ubiquitination and inhibition of the channel by NEDD4 and NEDD4L motif is present at residues Pro-617 to Tyr-621. The span at Val-632–Val-641 shows a compositional bias: acidic residues. Phosphoserine occurs at positions 634 and 636.

The protein belongs to the amiloride-sensitive sodium channel (TC 1.A.6) family. SCNN1B subfamily. Component of the heterotrimeric epithelial sodium channel (ENaC) composed of an alpha/SCNN1A, a beta/SCNN1B and a gamma/SCNN1G subunit. Interacts with WWP1 (via WW domains). Interacts with WWP2 (via WW domains); inhibits the channel. Interacts with the full-length immature form of PCSK9 (pro-PCSK9). Interacts (N-glycosylated) with BPIFA1; the interaction is direct and inhibits the proteolytic processing of SCNN1A and SCNN1G and the activation of ENaC. In terms of processing, ubiquitinated. Can be ubiquitinated at multiple sites and undergo monoubiquitination and polyubiquitination. Ubiquitination by NEDD4 or NEDD4L inhibits the ENaC channel through endocytosis, intracellular retention and degradation of its individual subunits. However, some studies could not confirm the ubiquitination of this subunit of the ENaC. Post-translationally, phosphorylated on serine and threonine residues. Aldosterone and insulin increase the basal level of phosphorylation. N-glycosylated. N-glycosylation is required for interaction with BPIFA1.

The protein resides in the apical cell membrane. Its subcellular location is the cytoplasmic vesicle membrane. The enzyme catalyses Na(+)(in) = Na(+)(out). Its activity is regulated as follows. Originally identified and characterized by its inhibition by the diuretic drug amiloride. Functionally, this is one of the three pore-forming subunits of the heterotrimeric epithelial sodium channel (ENaC), a critical regulator of sodium balance and fluid homeostasis. ENaC operates in epithelial tissues, where it mediates the electrodiffusion of sodium ions from extracellular fluid through the apical membrane of cells, with water following osmotically. It plays a key role in maintaining sodium homeostasis through electrogenic sodium reabsorption in the kidneys. Additionally, ENaC is essential for airway surface liquid homeostasis, which is crucial for proper mucus clearance. The protein is Epithelial sodium channel subunit beta of Oryctolagus cuniculus (Rabbit).